Reading from the N-terminus, the 366-residue chain is UDP-N-acetylglucosamine--N-acetylmuramyl-(pentapeptide) pyrophosphoryl-undecaprenol N-acetylglucosamine transferase (366 aa).

UDP-N-acetyl-alpha-D-glucosamine contacts are provided by residues 14–16 (TGG), asparagine 125, arginine 168, serine 196, and glutamine 297.

This sequence belongs to the glycosyltransferase 28 family. MurG subfamily.

The protein localises to the cell inner membrane. It catalyses the reaction di-trans,octa-cis-undecaprenyl diphospho-N-acetyl-alpha-D-muramoyl-L-alanyl-D-glutamyl-meso-2,6-diaminopimeloyl-D-alanyl-D-alanine + UDP-N-acetyl-alpha-D-glucosamine = di-trans,octa-cis-undecaprenyl diphospho-[N-acetyl-alpha-D-glucosaminyl-(1-&gt;4)]-N-acetyl-alpha-D-muramoyl-L-alanyl-D-glutamyl-meso-2,6-diaminopimeloyl-D-alanyl-D-alanine + UDP + H(+). The protein operates within cell wall biogenesis; peptidoglycan biosynthesis. Its function is as follows. Cell wall formation. Catalyzes the transfer of a GlcNAc subunit on undecaprenyl-pyrophosphoryl-MurNAc-pentapeptide (lipid intermediate I) to form undecaprenyl-pyrophosphoryl-MurNAc-(pentapeptide)GlcNAc (lipid intermediate II). This is UDP-N-acetylglucosamine--N-acetylmuramyl-(pentapeptide) pyrophosphoryl-undecaprenol N-acetylglucosamine transferase from Rhodopseudomonas palustris (strain ATCC BAA-98 / CGA009).